A 423-amino-acid chain; its full sequence is G2/mitotic-specific cyclin-B1 (423 aa).

Phosphoserine; by CDK1 is present on Ser-116. The residue at position 118 (Ser-118) is a Phosphoserine. Ser-123 is subject to Phosphoserine; by PLK1. Ser-137 is subject to Phosphoserine. Interaction with CDK2 regions lie at residues 159-167 (EYVKDIYAY) and 248-251 (YEEM). Thr-311 is modified (phosphothreonine).

Belongs to the cyclin family. Cyclin AB subfamily. As to quaternary structure, interacts with the CDC2 protein kinase to form a serine/threonine kinase holoenzyme complex also known as maturation promoting factor (MPF). The cyclin subunit imparts substrate specificity to the complex. Binds HEI10. Interacts with catalytically active RALBP1 and CDC2 during mitosis to form an endocytotic complex during interphase. Interacts with CCNF; interaction is required for nuclear localization. Interacts with CDK5RAP3. Interacts with RFPL4A and UBE2A. Interacts with INCA1. Ubiquitinated by the SCF(NIPA) complex during interphase, leading to its destruction. Deubiquitinated by USP22 during G2/M phase. Post-translationally, phosphorylated by PLK1 at Ser-123 on centrosomes during prophase: phosphorylation by PLK1 does not cause nuclear import. Phosphorylation at Ser-137 was also reported to be mediated by PLK1 but Ser-123 seems to be the primary phosphorylation site.

It is found in the cytoplasm. The protein resides in the nucleus. It localises to the cytoskeleton. The protein localises to the microtubule organizing center. Its subcellular location is the centrosome. In terms of biological role, essential for the control of the cell cycle at the G2/M (mitosis) transition. The chain is G2/mitotic-specific cyclin-B1 (Ccnb1) from Rattus norvegicus (Rat).